A 191-amino-acid chain; its full sequence is MAVSTVSSFLLPSFGIPSSSPSSTRLKVSLLPSSSTHGGLSSCVLTKPSVSLTKVFAVPDTLDPTPEILDEPASEVPSSSSISVDADKMAPKQKIRIKLRSYWVPLIEDSCKQILDAARNTNAKTMGPVPLPTKKRIYCVLKSPHVHKDARFHFEIRTHQRMIDILYPTAQTIDSLMQLDLPAGVDVEVKL.

Residues 1–56 (MAVSTVSSFLLPSFGIPSSSPSSTRLKVSLLPSSSTHGGLSSCVLTKPSVSLTKVF) constitute a chloroplast transit peptide.

It belongs to the universal ribosomal protein uS10 family. In terms of assembly, part of the 30S ribosomal subunit.

The protein localises to the plastid. It localises to the chloroplast. This chain is Small ribosomal subunit protein uS10c (RPS10), found in Arabidopsis thaliana (Mouse-ear cress).